Consider the following 538-residue polypeptide: Sucrose transport protein SUT1 (538 aa).

Over 1-52 the chain is Cytoplasmic; it reads MARGSGAGGGGGGGGGGLELSVGVGGGGGARGGGGGEAAAAVETAAPISLGR. A helical membrane pass occupies residues 53–73; it reads LILSGMVAGGVQYGWALQLSL. The Extracellular segment spans residues 74-81; it reads LTPYVQTL. The helical transmembrane segment at 82–102 threads the bilayer; that stretch reads GLSHALTSFMWLCGPIAGMVV. Over 103 to 123 the chain is Cytoplasmic; the sequence is QPCVGLYSDRCTSKWGRRRPY. The helical transmembrane segment at 124-144 threads the bilayer; sequence ILTGCVLICLAVVVIGFSADI. Residues 145–162 lie on the Extracellular side of the membrane; that stretch reads GYAMGDTKEDCSVYHGSR. Residues 163-183 form a helical membrane-spanning segment; it reads WHAAIVYVLGFWLLDFSNNTV. Residues 184–198 lie on the Cytoplasmic side of the membrane; sequence QGPARALMADLSGRH. The chain crosses the membrane as a helical span at residues 199-219; that stretch reads GPGTANSIFCSWMAMGNILGY. Residues 220–247 lie on the Extracellular side of the membrane; it reads SSGSTNNWHKWFPFLKTRACCEACANLK. The helical transmembrane segment at 248 to 268 threads the bilayer; the sequence is GAFLVAVIFLSLCLVITLIFA. Residues 269-306 are Cytoplasmic-facing; it reads KEVPFKGNAALPTKSNEPAEPEGTGPLAVLKGFRNLPT. The chain crosses the membrane as a helical span at residues 307–327; it reads GMPSVLIVTGLTWLSWFPFIL. Over 328–357 the chain is Extracellular; sequence YDTDWMGREIYHGDPKGTDPQIEAFNQGVR. The chain crosses the membrane as a helical span at residues 358–378; sequence AGAFGLLLNSIVLGFSSFLIE. Over 379 to 388 the chain is Cytoplasmic; the sequence is PMCRKVGPRV. The chain crosses the membrane as a helical span at residues 389 to 409; it reads VWVTSNFLVCIAMAATALISF. Residues 410-433 lie on the Extracellular side of the membrane; sequence WSLKDFHGTVQKAITADKSIKAVC. A helical transmembrane segment spans residues 434–454; sequence LVLFAFLGVPLAVLYSVPFAV. At 455–470 the chain is on the cytoplasmic side; sequence TAQLAATRGGGQGLCT. A helical membrane pass occupies residues 471-491; that stretch reads GVLNISIVIPQVVIALGAGPW. Residues 492-499 are Extracellular-facing; the sequence is DELFGKGN. A helical transmembrane segment spans residues 500–520; that stretch reads IPAFGLASGFALIGGVAGIFL. At 521 to 538 the chain is on the cytoplasmic side; that stretch reads LPKISKRQFRSVSMGGGH.

The protein belongs to the glycoside-pentoside-hexuronide (GPH) cation symporter transporter (TC 2.A.2.4) family. In terms of assembly, homodimer.

Its subcellular location is the cell membrane. It participates in glycan biosynthesis; sucrose metabolism. Responsible for the transport of sucrose into the cell, with the concomitant uptake of protons (symport system). May also transport other glucosides. May be required for apoplastic phloem sucrose loading in source tissues (e.g. leaves) in order to transport it to sink tissues (e.g. roots, flowers). The polypeptide is Sucrose transport protein SUT1 (SUT1) (Oryza sativa subsp. indica (Rice)).